Consider the following 558-residue polypeptide: Type I restriction enzyme MjaIX methylase subunit (558 aa).

The disordered stretch occupies residues 1-37; it reads MATLDKFLSIKENDEKTKKKESKKKSSKSNKTSESLV. The segment covering 8–18 has biased composition (basic and acidic residues); that stretch reads LSIKENDEKTK. The segment covering 19–28 has biased composition (basic residues); sequence KKESKKKSSK. S-adenosyl-L-methionine contacts are provided by residues 227–232, 256–258, and aspartate 283; these read KFYTPR and SGG.

The protein belongs to the N(4)/N(6)-methyltransferase family. The type I restriction/modification system is composed of three polypeptides R, M and S.

The enzyme catalyses a 2'-deoxyadenosine in DNA + S-adenosyl-L-methionine = an N(6)-methyl-2'-deoxyadenosine in DNA + S-adenosyl-L-homocysteine + H(+). The subtype gamma methyltransferase (M) subunit of a type I restriction enzyme. The M and S subunits together form a methyltransferase (MTase) that methylates A-3 on the top and A-2 on the bottom strand of the sequence 5'-CCAN(5)GTR-3'. In the presence of the R subunit the complex can also act as an endonuclease, binding to the same target sequence but cutting the DNA some distance from this site. Whether the DNA is cut or modified depends on the methylation state of the target sequence. When the target site is unmodified, the DNA is cut. When the target site is hemimethylated, the complex acts as a maintenance MTase modifying the DNA so that both strands become methylated. After locating a non-methylated recognition site, the enzyme complex serves as a molecular motor that translocates DNA in an ATP-dependent manner until a collision occurs that triggers cleavage. The sequence is that of Type I restriction enzyme MjaIX methylase subunit from Methanocaldococcus jannaschii (strain ATCC 43067 / DSM 2661 / JAL-1 / JCM 10045 / NBRC 100440) (Methanococcus jannaschii).